The sequence spans 905 residues: MATIHVDGKTLEVDGADNLLQACLSLGLDIPYFCWHPALGSVGACRQCAVKQYTDENDKRGRLVMSCMTPATDNTWISIEDEEAKQFRASVVEWLMTNHPHDCPVCEEGGHCHLQDMTVMTGHNERRYRFTKRTHQNQELGPFIAHEMNRCIACYRCVRYYKDYAGGTDLGVYGAHDNVYFGRVEDGVLESEFSGNLTEVCPTGVFTDKTHSERYNRKWDMQFAPSICHGCSSGCNISPGERYGEIRRIENRYNGSVNHYFLCDRGRFGYGYVNREDRPRQPLLVLSKQKLSLDGALDQAAALLKERKVVGIGSPRASLESNFALRELVGEGNFYSGINEGELDRLRLILQVMQEGPLPVPSIRDIEDHDAVFVLGEDLTQTAARIALALRQSVKGKAVEMAADMKVQPWLDAAVKNIAQHAQNPLFIASVSATRLDDVAEETVHAAPDDLARLGFAVAHAIDPSAPSVADLDPQAQAFAQRITDALLAAKRPLVVSGNSLGNKALIEAAANIAKALKQREKNGSISLVVGEANSLGLALFGGDSVEAALERLTSGQADAVVVLENDLYRRTDAARVDAALAAAKVVIVADHQQTATTAKAHLVLPAASFAEGDGTLVSQEGRAQRFFQVFDPTYYDARNMVREGWRWLHAIHSTLQGKRVDWTQLDHVTEAVAEAKPILAGIRDAAPAASFRIKGLKLAREPHRYSGRTAMRANISVHEPRTPQDIDSAFAFSMEGYSGSQEDRQQIPFAWSPGWNSPQAWNKFQDEVGGHLRAGDPGVRLIEPKGEGLDWFQAVPVPFSAKADSWKVVPLYHLFGSEENSSRAAPIQQRIPETYVALSKEDADRLGVNDGATLGFQLKGQALRLPLRIDEQLGAGLIGLPVGFAGIPAAIAGCSVEGLQEAAQ.

A 2Fe-2S ferredoxin-type domain is found at 1–83 (MATIHVDGKT…NTWISIEDEE (83 aa)). Positions 34, 45, 48, and 67 each coordinate [2Fe-2S] cluster. Positions 83 to 122 (EAKQFRASVVEWLMTNHPHDCPVCEEGGHCHLQDMTVMTG) constitute a 4Fe-4S His(Cys)3-ligated-type domain. [4Fe-4S] cluster contacts are provided by His-99, Cys-103, Cys-106, Cys-112, Cys-151, Cys-154, Cys-157, Cys-201, Cys-228, Cys-231, Cys-235, and Cys-263. Residues 221–277 (MQFAPSICHGCSSGCNISPGERYGEIRRIENRYNGSVNHYFLCDRGRFGYGYVNRED) form the 4Fe-4S Mo/W bis-MGD-type domain.

This sequence belongs to the complex I 75 kDa subunit family. Composed of 13 different subunits. Subunits NuoCD, E, F, and G constitute the peripheral sector of the complex. It depends on [2Fe-2S] cluster as a cofactor. [4Fe-4S] cluster serves as cofactor.

The enzyme catalyses a quinone + NADH + 5 H(+)(in) = a quinol + NAD(+) + 4 H(+)(out). NDH-1 shuttles electrons from NADH, via FMN and iron-sulfur (Fe-S) centers, to quinones in the respiratory chain. The immediate electron acceptor for the enzyme in this species is believed to be ubiquinone. Couples the redox reaction to proton translocation (for every two electrons transferred, four hydrogen ions are translocated across the cytoplasmic membrane), and thus conserves the redox energy in a proton gradient. This chain is NADH-quinone oxidoreductase subunit G (nuoG), found in Pseudomonas aeruginosa (strain ATCC 15692 / DSM 22644 / CIP 104116 / JCM 14847 / LMG 12228 / 1C / PRS 101 / PAO1).